We begin with the raw amino-acid sequence, 94 residues long: Large ribosomal subunit protein bL25 (94 aa).

It belongs to the bacterial ribosomal protein bL25 family. Part of the 50S ribosomal subunit; part of the 5S rRNA/L5/L18/L25 subcomplex. Contacts the 5S rRNA. Binds to the 5S rRNA independently of L5 and L18.

This is one of the proteins that binds to the 5S RNA in the ribosome where it forms part of the central protuberance. This Shigella boydii serotype 4 (strain Sb227) protein is Large ribosomal subunit protein bL25.